Reading from the N-terminus, the 286-residue chain is Ribonuclease H1 (286 aa).

Positions 101–115 (EPLDGDGHESAEPYA) are enriched in basic and acidic residues. The segment at 101-127 (EPLDGDGHESAEPYAKHMKPSVEPAPP) is disordered. The RNase H type-1 domain occupies 136–282 (MGDFVVVYTD…ADRLAREGAK (147 aa)). Residues Asp-145, Glu-186, Asp-210, and Asp-274 each contribute to the Mg(2+) site.

This sequence belongs to the RNase H family. Monomer. Mg(2+) is required as a cofactor. In terms of tissue distribution, ubiquitous.

Its subcellular location is the cytoplasm. It carries out the reaction Endonucleolytic cleavage to 5'-phosphomonoester.. With respect to regulation, in the presence of magnesium, manganese is inhibitory. Endonuclease that specifically degrades the RNA of RNA-DNA hybrids. Plays a role in RNA polymerase II (RNAp II) transcription termination by degrading R-loop RNA-DNA hybrid formation at G-rich pause sites located downstream of the poly(A) site and behind the elongating RNAp II. The polypeptide is Ribonuclease H1 (RNASEH1) (Homo sapiens (Human)).